A 247-amino-acid chain; its full sequence is Coiled-coil domain-containing protein 124 homolog (247 aa).

The segment at 1–146 (MGGKKFGTNS…TTTTGSDDHE (146 aa)) is disordered. A coiled-coil region spans residues 8–85 (TNSKAEEARS…QEDKEIKERY (78 aa)). Residues 11–114 (KAEEARSKKA…EQKQREKELA (104 aa)) are compositionally biased toward basic and acidic residues. Positions 122 to 140 (VVVVPTTTTTTTTTTTTTT) are enriched in low complexity.

Belongs to the CCDC124 family. Associates with translationally inactive ribosomes in the nonrotated state.

Its function is as follows. Ribosome-binding protein involved in ribosome hibernation: associates with translationally inactive ribosomes and stabilizes the nonrotated conformation of the 80S ribosome, thereby promoting ribosome preservation and storage. This Dictyostelium discoideum (Social amoeba) protein is Coiled-coil domain-containing protein 124 homolog.